We begin with the raw amino-acid sequence, 288 residues long: ATP synthase gamma chain (288 aa).

The protein belongs to the ATPase gamma chain family. As to quaternary structure, F-type ATPases have 2 components, CF(1) - the catalytic core - and CF(0) - the membrane proton channel. CF(1) has five subunits: alpha(3), beta(3), gamma(1), delta(1), epsilon(1). CF(0) has three main subunits: a, b and c.

Its subcellular location is the cell inner membrane. In terms of biological role, produces ATP from ADP in the presence of a proton gradient across the membrane. The gamma chain is believed to be important in regulating ATPase activity and the flow of protons through the CF(0) complex. The polypeptide is ATP synthase gamma chain (Chromobacterium violaceum (strain ATCC 12472 / DSM 30191 / JCM 1249 / CCUG 213 / NBRC 12614 / NCIMB 9131 / NCTC 9757 / MK)).